The following is a 240-amino-acid chain: Venom hemolysin-like protein 1 (240 aa).

The signal sequence occupies residues 1–18 (MQYKLILLVVGLFQASLA). Positions 25–50 (ESVPHPSKDVAPPDTQDSSTQTEVTT) are disordered. Polar residues predominate over residues 39–50 (TQDSSTQTEVTT).

Expressed by the venom gland (anterior main gland) (at protein level).

Its subcellular location is the secreted. This Platymeris rhadamanthus (Red spot assassin bug) protein is Venom hemolysin-like protein 1.